A 648-amino-acid chain; its full sequence is Transmembrane 9 superfamily member 8 (648 aa).

The first 33 residues, 1–33 (MAMEFLRSSRRILESSGCAIALIFLLFIHGAHS), serve as a signal peptide directing secretion. Residues 34-285 (FYLPGVAPQD…YLLMSDNQIH (252 aa)) are Lumenal-facing. The chain crosses the membrane as a helical span at residues 286-306 (WFSIVNSLMIVLFLSGMVAMI). Residues 307 to 355 (MLRTLYRDISRYNELETQEEAQEETGWKLVHGDVFRLPTNSDLLCVYVG) are Cytoplasmic-facing. The helical transmembrane segment at 356–376 (TGVQCLGMVFVTMIFAMLGFL) threads the bilayer. At 377–381 (SPSNR) the chain is on the lumenal side. A helical transmembrane segment spans residues 382 to 402 (GGLMTAMLLLWVFMGLFAGYA). Residues 403 to 422 (SSRLYKMFKGTEWKRIAFRT) are Cytoplasmic-facing. Residues 423–443 (AFLFPAVVSAIFFVLNALIWG) traverse the membrane as a helical segment. Topologically, residues 444–455 (QKSSGAVPFGTM) are lumenal. A helical membrane pass occupies residues 456–476 (FALIFLWFGISVPLVFVGGYI). Over 477-506 (GFKKPAADDPVKTNKIPRQIPEQAWYMNPV) the chain is Cytoplasmic. A helical transmembrane segment spans residues 507–527 (FSILIGGILPFGAVFIELFFI). Residues 528-538 (LTSIWLNQFYY) are Lumenal-facing. A helical membrane pass occupies residues 539-559 (IFGFLFLVFVILIVTCAEITV). Residues 560 to 577 (VLCYFQLCSEDYLWWWRS) lie on the Cytoplasmic side of the membrane. A helical membrane pass occupies residues 578 to 598 (YLTSGSSALYLFLYATFYFFT). The Lumenal portion of the chain corresponds to 599-604 (KLQITK). The chain crosses the membrane as a helical span at residues 605–625 (LVSAMLYFGYMLIASYAFFVL). The Cytoplasmic portion of the chain corresponds to 626–648 (TGTIGFYACLWFTRLIYSSVKID). The Endoplasmic reticulum export signal signature appears at 637–642 (FTRLIY). Positions 646–648 (KID) match the Golgi retention signal motif.

The protein belongs to the nonaspanin (TM9SF) (TC 9.A.2) family.

Its subcellular location is the endosome membrane. The protein resides in the golgi apparatus membrane. In Arabidopsis thaliana (Mouse-ear cress), this protein is Transmembrane 9 superfamily member 8.